Here is a 1241-residue protein sequence, read N- to C-terminus: ATP-dependent helicase/nuclease subunit A (1241 aa).

The 474-residue stretch at serine 12–arginine 485 folds into the UvrD-like helicase ATP-binding domain. ATP is bound at residue alanine 33–threonine 40. A UvrD-like helicase C-terminal domain is found at glycine 505–glycine 805.

The protein belongs to the helicase family. AddA subfamily. Heterodimer of AddA and AddB/RexB. Mg(2+) serves as cofactor.

It carries out the reaction Couples ATP hydrolysis with the unwinding of duplex DNA by translocating in the 3'-5' direction.. The enzyme catalyses ATP + H2O = ADP + phosphate + H(+). In terms of biological role, the heterodimer acts as both an ATP-dependent DNA helicase and an ATP-dependent, dual-direction single-stranded exonuclease. Recognizes the chi site generating a DNA molecule suitable for the initiation of homologous recombination. The AddA nuclease domain is required for chi fragment generation; this subunit has the helicase and 3' -&gt; 5' nuclease activities. The chain is ATP-dependent helicase/nuclease subunit A from Bacillus cereus (strain ATCC 14579 / DSM 31 / CCUG 7414 / JCM 2152 / NBRC 15305 / NCIMB 9373 / NCTC 2599 / NRRL B-3711).